A 386-amino-acid chain; its full sequence is Histidine decarboxylase (386 aa).

A substrate-binding site is contributed by H120. The residue at position 233 (K233) is an N6-(pyridoxal phosphate)lysine.

This sequence belongs to the group II decarboxylase family. In terms of assembly, homotetramer. It depends on pyridoxal 5'-phosphate as a cofactor.

It carries out the reaction L-histidine + H(+) = histamine + CO2. This chain is Histidine decarboxylase, found in Vibrio campbellii (strain ATCC BAA-1116).